The following is a 94-amino-acid chain: Integration host factor subunit beta (94 aa).

It belongs to the bacterial histone-like protein family. In terms of assembly, heterodimer of an alpha and a beta chain.

This protein is one of the two subunits of integration host factor, a specific DNA-binding protein that functions in genetic recombination as well as in transcriptional and translational control. This chain is Integration host factor subunit beta, found in Vibrio atlanticus (strain LGP32) (Vibrio splendidus (strain Mel32)).